The sequence spans 487 residues: Phosphatidylserine synthase 2 (487 aa).

A compositionally biased stretch (basic and acidic residues) spans 1–10; that stretch reads MRRGERRDAG. The disordered stretch occupies residues 1–50; sequence MRRGERRDAGGPRPESPVPAGRASLEEPPDGPSAGQATGPGEGRRSTESE. Topologically, residues 1–62 are cytoplasmic; it reads MRRGERRDAG…DDGTNTFFWR (62 aa). A phosphoserine mark is found at S16 and S24. A helical transmembrane segment spans residues 63 to 83; sequence AHTLTVLFILTCTLGYVTLLE. Residues 84-96 lie on the Lumenal side of the membrane; it reads ETPQDTAYNTKRG. Residues 97-117 traverse the membrane as a helical segment; it reads IVASILVFLCFGVTQAKDGPF. The Cytoplasmic portion of the chain corresponds to 118 to 126; that stretch reads SRPHPAYWR. The helical transmembrane segment at 127–147 threads the bilayer; sequence FWLCVSVVYELFLIFILFQTV. Residues 148 to 313 lie on the Lumenal side of the membrane; it reads QDGRQFLKYV…EWKPASSLRR (166 aa). A glycan (N-linked (GlcNAc...) asparagine) is linked at N181. Residues 314 to 334 form a helical membrane-spanning segment; the sequence is WLAVCGIILVFLLAELNTFYL. K335 is a topological domain (cytoplasmic). Residues 336–356 form a helical membrane-spanning segment; sequence FVLWMPPEHYLVLLRLVFFVN. The Lumenal segment spans residues 357–376; sequence VGGVAMREIYDFMDDPKPHK. A helical membrane pass occupies residues 377–397; sequence KLGPQAWLVAAITATELLIVV. Over 398–403 the chain is Cytoplasmic; the sequence is KYDPHT. Residues 404-424 form a helical membrane-spanning segment; that stretch reads LTLSLPFYISQCWTLGSVLAL. The Lumenal portion of the chain corresponds to 425 to 487; it reads TWTVWRFFLR…AEGEGAPTPN (63 aa). Residues 451-487 form a disordered region; sequence KDDQGSTVGNGDQHPLGLDEDLLGPGVAEGEGAPTPN. Position 485 is a phosphothreonine (T485).

Belongs to the phosphatidyl serine synthase family.

The protein resides in the endoplasmic reticulum membrane. It carries out the reaction a 1,2-diacyl-sn-glycero-3-phosphoethanolamine + L-serine = a 1,2-diacyl-sn-glycero-3-phospho-L-serine + ethanolamine. The catalysed reaction is 1-hexadecanoyl-2-(9Z-octadecenoyl)-sn-glycero-3-phosphoethanolamine + L-serine = 1-hexadecanoyl-2-(9Z-octadecenoyl)-sn-glycero-3-phospho-L-serine + ethanolamine. The enzyme catalyses 1-hexadecanoyl-2-(4Z,7Z,10Z,13Z,16Z,19Z-docosahexaenoyl)-sn-glycero-3-phosphoethanolamine + L-serine = 1-hexadecanoyl-2-(4Z,7Z,10Z,13Z,16Z,19Z-docosahexaenoyl)-sn-glycero-3-phosphoserine + ethanolamine. It catalyses the reaction 1-octadecanoyl-2-(5Z,8Z,11Z,14Z)-eicosatetraenoyl-sn-glycero-3-phosphoethanolamine + L-serine = 1-octadecanoyl-2-(5Z,8Z,11Z,14Z)-eicosatetraenoyl-sn-glycero-3-phosphoserine + ethanolamine. It carries out the reaction 1-octadecanoyl-2-(4Z,7Z,10Z,13Z,16Z,19Z-docosahexaenoyl)-sn-glycero-3-phosphoethanolamine + L-serine = 1-octadecanoyl-2-(4Z,7Z,10Z,13Z,16Z,19Z-docosahexaenoyl)-sn-glycero-3-phosphoserine + ethanolamine. The catalysed reaction is 1-(1Z-octadecenyl)-2-(4Z,7Z,10Z,13Z,16Z,19Z-docosahexaenoyl)-sn-glycero-3-phosphoethanolamine + L-serine = 1-(1Z-octadecenyl)-2-(4Z,7Z,10Z,13Z,16Z,19Z-docosahexaenoyl)-sn-glycero-3-phospho-L-serine + ethanolamine. The enzyme catalyses 1-octadecanoyl-2-(9Z-octadecenoyl)-sn-glycero-3-phosphoethanolamine + L-serine = 1-octadecanoyl-2-(9Z-octadecenoyl)-sn-glycero-3-phospho-L-serine + ethanolamine. It catalyses the reaction 1-(1Z-octadecenyl)-2-(9Z-octadecenoyl)-sn-glycero-3-phosphoethanolamine + L-serine = 1-(1Z-octadecenyl)-2-(9Z-octadecenoyl)-sn-glycero-3-phospho-L-serine + ethanolamine. It carries out the reaction 1-(1Z-octadecenyl)-2-(5Z,8Z,11Z,14Z- eicosatetraenoyl)-sn-glycero-3-phosphoethanolamine + L-serine = 1-(1Z-octadecenyl)-2-(5Z,8Z,11Z,14Z-eicosatetraenoyl)-sn-glycero-3-phospho-L-serine + ethanolamine. The protein operates within phospholipid metabolism; phosphatidylserine biosynthesis. Its activity is regulated as follows. Requires calcium ions. Inhibited by exogenous phosphatidylserine. Catalyzes a base-exchange reaction in which the polar head group of phosphatidylethanolamine (PE) or phosphatidylcholine (PC) is replaced by L-serine. Catalyzes the conversion of phosphatatidylethanolamine and does not act on phosphatidylcholine. Can utilize both phosphatidylethanolamine (PE) plasmalogen and diacyl PE as substrate and the latter is six times better utilized, indicating the importance of an ester linkage at the sn-1 position. Although it shows no sn-1 fatty acyl preference, exhibits significant preference towards docosahexaenoic acid (22:6n-3) compared with 18:1 or 20:4 at the sn-2 position. The polypeptide is Phosphatidylserine synthase 2 (PTDSS2) (Homo sapiens (Human)).